The following is a 324-amino-acid chain: Beta-ketoacyl-[acyl-carrier-protein] synthase III (324 aa).

Active-site residues include C112 and H249. Positions 250-254 (QANRR) are ACP-binding. N279 is a catalytic residue.

This sequence belongs to the thiolase-like superfamily. FabH family. As to quaternary structure, homodimer.

Its subcellular location is the cytoplasm. The enzyme catalyses malonyl-[ACP] + acetyl-CoA + H(+) = 3-oxobutanoyl-[ACP] + CO2 + CoA. It participates in lipid metabolism; fatty acid biosynthesis. In terms of biological role, catalyzes the condensation reaction of fatty acid synthesis by the addition to an acyl acceptor of two carbons from malonyl-ACP. Catalyzes the first condensation reaction which initiates fatty acid synthesis and may therefore play a role in governing the total rate of fatty acid production. Possesses both acetoacetyl-ACP synthase and acetyl transacylase activities. Its substrate specificity determines the biosynthesis of branched-chain and/or straight-chain of fatty acids. The chain is Beta-ketoacyl-[acyl-carrier-protein] synthase III from Streptococcus pyogenes serotype M1.